The following is a 1182-amino-acid chain: Myosin IC heavy chain (1182 aa).

The region spanning 15 to 698 (EGLDDMTLLS…MLFSLEETRE (684 aa)) is the Myosin motor domain. 109-116 (GESGAGKT) provides a ligand contact to ATP. The tract at residues 571–593 (AAELVATLMKSTPHYIRTIKPND) is actin-binding. A TH1 domain is found at 774–957 (RNRFSMISVR…QFHIASGLPA (184 aa)). Disordered regions lie at residues 999–1052 (KPAP…PAPG) and 1064–1103 (SKPL…PAGQ). A compositionally biased stretch (low complexity) spans 1013 to 1042 (KKPAPTAPGGAPMMKKPAPAPGGAPMMKKP). The span at 1081 to 1092 (PTAPGGPAPAGA) shows a compositional bias: pro residues. Residues 1123 to 1182 (PPPQQYIALYEYDAMQPDELTFKENDVINLIKKVDADWWQGELVRTKQIGMLPSNYVQQI) form the SH3 domain.

Belongs to the TRAFAC class myosin-kinesin ATPase superfamily. Myosin family. As to quaternary structure, myosin I heavy chain is single-headed. Dimer of a heavy and a light chain. Inability to self-assemble into filaments.

It is found in the cell projection. The protein localises to the lamellipodium. Myosin is a protein that binds to actin and has ATPase activity that is activated by actin. Involved in the process of phagocytosis and appears to support streaming behavior. In Dictyostelium discoideum (Social amoeba), this protein is Myosin IC heavy chain (myoC).